The following is a 289-amino-acid chain: (+)-kolavelool synthase (289 aa).

Belongs to the diterpene synthase family.

The enzyme catalyses (+)-kolavenyl diphosphate + H2O = (+)-kolavelool + diphosphate. Functionally, involved in the biosynthesis of (+)-O-methylkolavelool. Catalyzes the biosynthesis of (+)-kolavelool from (+)-kolavenyl diphosphate via the release of the diphosphate moiety through the nucleophilic addition of a water molecule. In Herpetosiphon aurantiacus (strain ATCC 23779 / DSM 785 / 114-95), this protein is (+)-kolavelool synthase.